Consider the following 210-residue polypeptide: Somatotropin-2 (210 aa).

Positions 1–22 are cleaved as a signal peptide; sequence MGQVFLLMPVLLVSCFLGQGAA. His38 serves as a coordination point for Zn(2+). Cys71 and Cys183 are disulfide-bonded. Residue Glu192 coordinates Zn(2+). An intrachain disulfide couples Cys200 to Cys208.

Belongs to the somatotropin/prolactin family.

Its subcellular location is the secreted. In terms of biological role, growth hormone plays an important role in growth control and is involved in the regulation of several anabolic processes. Implicated as an osmoregulatory substance important for seawater adaptation. The polypeptide is Somatotropin-2 (gh2) (Oncorhynchus mykiss (Rainbow trout)).